We begin with the raw amino-acid sequence, 691 residues long: Amino-acid acetyltransferase, mitochondrial (691 aa).

Residues 1–27 are compositionally biased toward polar residues; it reads MSSTSLAWPRTAKSSLLQSADFSSTSK. 2 disordered regions span residues 1–29 and 65–95; these read MSST…SKGY and RLKA…PSGV. The span at 75 to 87 shows a compositional bias: basic and acidic residues; sequence QVKEPEKESKDDA. The N-acetyltransferase domain maps to 512 to 681; that stretch reads NRPRMSLDDP…YEAVCRSIQP (170 aa).

The protein belongs to the acetyltransferase family.

The protein localises to the mitochondrion. It carries out the reaction L-glutamate + acetyl-CoA = N-acetyl-L-glutamate + CoA + H(+). It participates in amino-acid biosynthesis; L-arginine biosynthesis; N(2)-acetyl-L-ornithine from L-glutamate: step 1/4. Functionally, N-acetylglutamate synthase involved in arginine biosynthesis. The sequence is that of Amino-acid acetyltransferase, mitochondrial (arg2) from Aspergillus terreus (strain NIH 2624 / FGSC A1156).